A 283-amino-acid polypeptide reads, in one-letter code: ATP phosphoribosyltransferase (283 aa).

This sequence belongs to the ATP phosphoribosyltransferase family. Long subfamily. The cofactor is Mg(2+).

It is found in the cytoplasm. The catalysed reaction is 1-(5-phospho-beta-D-ribosyl)-ATP + diphosphate = 5-phospho-alpha-D-ribose 1-diphosphate + ATP. It functions in the pathway amino-acid biosynthesis; L-histidine biosynthesis; L-histidine from 5-phospho-alpha-D-ribose 1-diphosphate: step 1/9. With respect to regulation, feedback inhibited by histidine. Its function is as follows. Catalyzes the condensation of ATP and 5-phosphoribose 1-diphosphate to form N'-(5'-phosphoribosyl)-ATP (PR-ATP). Has a crucial role in the pathway because the rate of histidine biosynthesis seems to be controlled primarily by regulation of HisG enzymatic activity. The chain is ATP phosphoribosyltransferase from Rhodococcus erythropolis (strain PR4 / NBRC 100887).